The following is a 256-amino-acid chain: Small ribosomal subunit protein eS1 (256 aa).

Ala2 is subject to N-acetylalanine; partial.

Belongs to the eukaryotic ribosomal protein eS1 family. Component of the small ribosomal subunit. Mature ribosomes consist of a small (40S) and a large (60S) subunit. The 40S subunit contains about 33 different proteins and 1 molecule of RNA (18S). The 60S subunit contains about 49 different proteins and 3 molecules of RNA (25S, 5.8S and 5S).

The protein resides in the cytoplasm. This chain is Small ribosomal subunit protein eS1, found in Fusarium vanettenii (strain ATCC MYA-4622 / CBS 123669 / FGSC 9596 / NRRL 45880 / 77-13-4) (Fusarium solani subsp. pisi).